We begin with the raw amino-acid sequence, 277 residues long: MKQLYGVIGNPIGHSLSPVMHNNAFEHLNMDAHYHAFLVEEEVLGEAVRGLKALGISGFNVTTPHKVAIMEYLDEIDPLARKIGAVNTVVHKNGRLIGYNTDGIGFVRALQSISHEPLQGKRILLLGAGGASRAIYFSLADVGVKEIDVANRTVDKAKELIAARTADVNSVALSLEKATEEQGNYDIIIQTTTIGMHPHVEHTPLQICSLKKGTIVSDIIYNPFETKILCEAKEQGAIIQNGIDMFVYQGALAFEMWTGSVPNIGRMKQLVIEKLGG.

Shikimate contacts are provided by residues 15–17 (SLS) and Thr-62. The active-site Proton acceptor is Lys-66. Shikimate is bound by residues Asn-87 and Asp-102. Residues 127-131 (GAGGA), 151-156 (NRTVDK), and Ile-219 each bind NADP(+). A shikimate-binding site is contributed by Tyr-221. Position 242 (Gly-242) interacts with NADP(+).

The protein belongs to the shikimate dehydrogenase family. Homodimer.

The enzyme catalyses shikimate + NADP(+) = 3-dehydroshikimate + NADPH + H(+). Its pathway is metabolic intermediate biosynthesis; chorismate biosynthesis; chorismate from D-erythrose 4-phosphate and phosphoenolpyruvate: step 4/7. Functionally, involved in the biosynthesis of the chorismate, which leads to the biosynthesis of aromatic amino acids. Catalyzes the reversible NADPH linked reduction of 3-dehydroshikimate (DHSA) to yield shikimate (SA). This chain is Shikimate dehydrogenase (NADP(+)), found in Bacillus cereus (strain G9842).